The following is a 207-amino-acid chain: Proteasome subunit beta (207 aa).

Residues methionine 1–glycine 7 constitute a propeptide, removed in mature form; by autocatalysis. Threonine 8 functions as the Nucleophile in the catalytic mechanism.

Belongs to the peptidase T1B family. In terms of assembly, the 20S proteasome core is composed of 14 alpha and 14 beta subunits that assemble into four stacked heptameric rings, resulting in a barrel-shaped structure. The two inner rings, each composed of seven catalytic beta subunits, are sandwiched by two outer rings, each composed of seven alpha subunits. The catalytic chamber with the active sites is on the inside of the barrel. Has a gated structure, the ends of the cylinder being occluded by the N-termini of the alpha-subunits. Is capped at one or both ends by the proteasome regulatory ATPase, PAN.

Its subcellular location is the cytoplasm. It carries out the reaction Cleavage of peptide bonds with very broad specificity.. Its activity is regulated as follows. The formation of the proteasomal ATPase PAN-20S proteasome complex, via the docking of the C-termini of PAN into the intersubunit pockets in the alpha-rings, triggers opening of the gate for substrate entry. Interconversion between the open-gate and close-gate conformations leads to a dynamic regulation of the 20S proteasome proteolysis activity. In terms of biological role, component of the proteasome core, a large protease complex with broad specificity involved in protein degradation. This Methanothrix thermoacetophila (strain DSM 6194 / JCM 14653 / NBRC 101360 / PT) (Methanosaeta thermophila) protein is Proteasome subunit beta.